A 353-amino-acid polypeptide reads, in one-letter code: JmjC domain-containing protein E (353 aa).

The JmjC domain occupies 138–348 (YYIQYQNNSL…ETTKYQKQIK (211 aa)).

This is JmjC domain-containing protein E (jcdE) from Dictyostelium discoideum (Social amoeba).